Reading from the N-terminus, the 118-residue chain is MPRVKGGTVTRKRRKKMIKLAKGYYGSKHTLFKVANQQVMKSLLYAFRDRRQKKRDFRKLWITRINAAARMNGLSYSRLMHGLKLAGIEVNRKMLADLAVHDEKAFAELATVAKNNLK.

The protein belongs to the bacterial ribosomal protein bL20 family.

Binds directly to 23S ribosomal RNA and is necessary for the in vitro assembly process of the 50S ribosomal subunit. It is not involved in the protein synthesizing functions of that subunit. This chain is Large ribosomal subunit protein bL20, found in Bacillus cytotoxicus (strain DSM 22905 / CIP 110041 / 391-98 / NVH 391-98).